A 133-amino-acid polypeptide reads, in one-letter code: uncharacterized protein (133 aa).

2 consecutive transmembrane segments (helical) span residues 13–33 (FLLS…LFLS) and 73–93 (FGNP…LLLL).

The protein resides in the membrane. This is an uncharacterized protein from Saccharomyces cerevisiae (strain ATCC 204508 / S288c) (Baker's yeast).